Consider the following 529-residue polypeptide: Putative amidohydrolase YtcJ (529 aa).

It belongs to the metallo-dependent hydrolases superfamily.

The sequence is that of Putative amidohydrolase YtcJ (ytcJ) from Bacillus subtilis (strain 168).